The chain runs to 372 residues: Carbamoyl phosphate synthase small chain (372 aa).

Positions 1-179 are CPSase; that stretch reads MRAILALEDG…ALVTGKTLPP (179 aa). The L-glutamine site is built by Ser45, Gly231, and Gly233. One can recognise a Glutamine amidotransferase type-1 domain in the interval 183 to 369; it reads DIVAFDFGIK…RKMIAASKRQ (187 aa). Cys258 (nucleophile) is an active-site residue. The L-glutamine site is built by Leu259, Gln262, Asn300, Gly302, and Phe303. Active-site residues include His342 and Glu344.

The protein belongs to the CarA family. As to quaternary structure, composed of two chains; the small (or glutamine) chain promotes the hydrolysis of glutamine to ammonia, which is used by the large (or ammonia) chain to synthesize carbamoyl phosphate. Tetramer of heterodimers (alpha,beta)4.

It catalyses the reaction hydrogencarbonate + L-glutamine + 2 ATP + H2O = carbamoyl phosphate + L-glutamate + 2 ADP + phosphate + 2 H(+). It carries out the reaction L-glutamine + H2O = L-glutamate + NH4(+). It participates in amino-acid biosynthesis; L-arginine biosynthesis; carbamoyl phosphate from bicarbonate: step 1/1. Its pathway is pyrimidine metabolism; UMP biosynthesis via de novo pathway; (S)-dihydroorotate from bicarbonate: step 1/3. In terms of biological role, small subunit of the glutamine-dependent carbamoyl phosphate synthetase (CPSase). CPSase catalyzes the formation of carbamoyl phosphate from the ammonia moiety of glutamine, carbonate, and phosphate donated by ATP, constituting the first step of 2 biosynthetic pathways, one leading to arginine and/or urea and the other to pyrimidine nucleotides. The small subunit (glutamine amidotransferase) binds and cleaves glutamine to supply the large subunit with the substrate ammonia. The polypeptide is Carbamoyl phosphate synthase small chain (Akkermansia muciniphila (strain ATCC BAA-835 / DSM 22959 / JCM 33894 / BCRC 81048 / CCUG 64013 / CIP 107961 / Muc)).